A 412-amino-acid chain; its full sequence is Palmitoyltransferase ZDHHC11 (412 aa).

At 1–42 (MDTRSGSQCSVTPEAILNNEKLVLPPRISRVNGWSLPLHYFQ) the chain is on the cytoplasmic side. Residues 43-63 (VVTWAVFVGLSSATFGIFIPF) traverse the membrane as a helical segment. Residues 64–69 (LPHAWK) lie on the Lumenal side of the membrane. Residues 70-90 (YIAYVVTGGIFSFHLVVHLIA) form a helical membrane-spanning segment. Over 91–176 (SCIDPADSNV…YWFFFSTVAS (86 aa)) the chain is Cytoplasmic. One can recognise a DHHC domain in the interval 125–175 (QFCHLCKVTVNKKTKHCISCNKCVSGFDHHCKWINNCVGSRNYWFFFSTVA). Residue C155 is the S-palmitoyl cysteine intermediate of the active site. Residues 177–197 (ATAGMLCLIAILLYVLVQYLV) traverse the membrane as a helical segment. Over 198–230 (NPGVLRTDPRYEDVKNMNTWLLFLPLFPVQVQT) the chain is Lumenal. A mediates interaction with IRF3 and STING1 region spans residues 198–412 (NPGVLRTDPR…MKTDSAESED (215 aa)). The helical transmembrane segment at 231–251 (LIVVIIGMLVLLLDFLGLVHL) threads the bilayer. Topologically, residues 252–412 (GQLLIFHIYL…MKTDSAESED (161 aa)) are cytoplasmic. The tract at residues 374-412 (HPDGGSMAQEADDAPSISTLGLQQETTEPMKTDSAESED) is disordered. Polar residues predominate over residues 389–400 (SISTLGLQQETT). Residues 401 to 412 (EPMKTDSAESED) show a composition bias toward basic and acidic residues.

It belongs to the DHHC palmitoyltransferase family. Interacts with IRF3 and STING1; in presence of DNA viruses recruits IRF3 to STING1 promoting IRF3 phosphorylation and activation. Expressed in testis.

It is found in the endoplasmic reticulum membrane. The catalysed reaction is L-cysteinyl-[protein] + hexadecanoyl-CoA = S-hexadecanoyl-L-cysteinyl-[protein] + CoA. Its function is as follows. Endoplasmic reticulum-localized palmitoyltransferase that could catalyze the addition of palmitate onto various protein substrates and be involved in a variety of cellular processes. Has a palmitoyltransferase activity toward NCDN and regulates NCDN association with endosome membranes through this palmitoylation. May play a role in cell proliferation. In terms of biological role, also has a palmitoyltransferase activity-independent function in DNA virus-triggered and CGAS-mediated innate immune response. Functions as an adapter that recruits IRF3 to STING1 to promote the activation of that key transcriptional regulator of type I interferon (IFN)-dependent immune response. This is Palmitoyltransferase ZDHHC11 from Homo sapiens (Human).